The chain runs to 392 residues: Elongation factor Tu (392 aa).

A tr-type G domain is found at 10 to 202 (KVHVNVGTIG…VLDEYIEDPI (193 aa)). A G1 region spans residues 19 to 26 (GHVDHGKT). 19–26 (GHVDHGKT) contacts GTP. Threonine 26 contributes to the Mg(2+) binding site. The G2 stretch occupies residues 60–64 (GITIN). A G3 region spans residues 81–84 (DCPG). GTP-binding positions include 81 to 85 (DCPGH) and 136 to 139 (NKCD). The tract at residues 136-139 (NKCD) is G4. The segment at 174–176 (SAL) is G5.

It belongs to the TRAFAC class translation factor GTPase superfamily. Classic translation factor GTPase family. EF-Tu/EF-1A subfamily. Monomer.

It localises to the cytoplasm. The catalysed reaction is GTP + H2O = GDP + phosphate + H(+). In terms of biological role, GTP hydrolase that promotes the GTP-dependent binding of aminoacyl-tRNA to the A-site of ribosomes during protein biosynthesis. The protein is Elongation factor Tu of Phytoplasma mali (strain AT).